The sequence spans 140 residues: 3-hydroxyacyl-[acyl-carrier-protein] dehydratase FabZ (140 aa).

Residue histidine 46 is part of the active site.

The protein belongs to the thioester dehydratase family. FabZ subfamily.

The protein resides in the cytoplasm. The enzyme catalyses a (3R)-hydroxyacyl-[ACP] = a (2E)-enoyl-[ACP] + H2O. Involved in unsaturated fatty acids biosynthesis. Catalyzes the dehydration of short chain beta-hydroxyacyl-ACPs and long chain saturated and unsaturated beta-hydroxyacyl-ACPs. In Pseudothermotoga lettingae (strain ATCC BAA-301 / DSM 14385 / NBRC 107922 / TMO) (Thermotoga lettingae), this protein is 3-hydroxyacyl-[acyl-carrier-protein] dehydratase FabZ.